We begin with the raw amino-acid sequence, 428 residues long: Chaperone SurA (428 aa).

An N-terminal signal peptide occupies residues 1–13 (MLGALLLSGAVHA). PpiC domains follow at residues 164–265 (SEEF…KLLE) and 276–375 (RDEV…EVLG).

The protein resides in the periplasm. The catalysed reaction is [protein]-peptidylproline (omega=180) = [protein]-peptidylproline (omega=0). Its function is as follows. Chaperone involved in the correct folding and assembly of outer membrane proteins. Recognizes specific patterns of aromatic residues and the orientation of their side chains, which are found more frequently in integral outer membrane proteins. May act in both early periplasmic and late outer membrane-associated steps of protein maturation. The protein is Chaperone SurA of Pseudomonas syringae pv. tomato (strain ATCC BAA-871 / DC3000).